A 110-amino-acid polypeptide reads, in one-letter code: DNA-binding protein Mlab_1482 (110 aa).

The protein belongs to the PDCD5 family.

This Methanocorpusculum labreanum (strain ATCC 43576 / DSM 4855 / Z) protein is DNA-binding protein Mlab_1482.